We begin with the raw amino-acid sequence, 325 residues long: Protein SAR DEFICIENT 4 (325 aa).

The transit peptide at 1–42 (MAALPVFIPAESFPSILSHETLINHFRTNLPKHSSTITSPVR) directs the protein to the chloroplast.

The protein belongs to the ornithine cyclodeaminase/mu-crystallin family.

It is found in the plastid. The protein localises to the chloroplast. Functionally, involved in the biosynthesis of pipecolate (Pip), a metabolite that orchestrates defense amplification, positive regulation of salicylic acid (SA) biosynthesis, and priming to guarantee effective local resistance induction and the establishment of systemic acquired resistance (SAR). Converts delta-(1)-piperideine-2-carboxylate (P2C) to Pip. Mediates reduction of P2C and biosynthesis of Pip in systemic tissue and contributes to SAR establishment. Does not possess ornithine cyclodeaminase activity in vitro. The sequence is that of Protein SAR DEFICIENT 4 from Arabidopsis thaliana (Mouse-ear cress).